The primary structure comprises 102 residues: Small ribosomal subunit protein uS10 (102 aa).

Belongs to the universal ribosomal protein uS10 family. Part of the 30S ribosomal subunit.

In terms of biological role, involved in the binding of tRNA to the ribosomes. In Thermosipho africanus (strain TCF52B), this protein is Small ribosomal subunit protein uS10.